Here is a 375-residue protein sequence, read N- to C-terminus: Glutamate 5-kinase (375 aa).

Lys-17 contributes to the ATP binding site. Residues Ser-58, Asp-145, and Asn-157 each contribute to the substrate site. Residues 177–178 (SD) and 219–225 (TGGMVTK) contribute to the ATP site. Residues 281 to 359 (QGALTLDDGA…RELARELGPA (79 aa)) form the PUA domain.

Belongs to the glutamate 5-kinase family.

It is found in the cytoplasm. It catalyses the reaction L-glutamate + ATP = L-glutamyl 5-phosphate + ADP. Its pathway is amino-acid biosynthesis; L-proline biosynthesis; L-glutamate 5-semialdehyde from L-glutamate: step 1/2. Functionally, catalyzes the transfer of a phosphate group to glutamate to form L-glutamate 5-phosphate. The protein is Glutamate 5-kinase of Streptomyces avermitilis (strain ATCC 31267 / DSM 46492 / JCM 5070 / NBRC 14893 / NCIMB 12804 / NRRL 8165 / MA-4680).